Reading from the N-terminus, the 351-residue chain is S-adenosylmethionine:tRNA ribosyltransferase-isomerase (351 aa).

This sequence belongs to the QueA family. Monomer.

The protein resides in the cytoplasm. The catalysed reaction is 7-aminomethyl-7-carbaguanosine(34) in tRNA + S-adenosyl-L-methionine = epoxyqueuosine(34) in tRNA + adenine + L-methionine + 2 H(+). It participates in tRNA modification; tRNA-queuosine biosynthesis. Its function is as follows. Transfers and isomerizes the ribose moiety from AdoMet to the 7-aminomethyl group of 7-deazaguanine (preQ1-tRNA) to give epoxyqueuosine (oQ-tRNA). The sequence is that of S-adenosylmethionine:tRNA ribosyltransferase-isomerase from Hyphomonas neptunium (strain ATCC 15444).